We begin with the raw amino-acid sequence, 212 residues long: Glycerol-3-phosphate acyltransferase (212 aa).

Helical transmembrane passes span 3-23 (IIIM…LWIG), 70-90 (IPII…FAII), 110-130 (AGVL…IFLL), 143-163 (ITVA…GFIL), and 164-184 (TDYD…IIIR).

This sequence belongs to the PlsY family. As to quaternary structure, probably interacts with PlsX.

The protein localises to the cell membrane. It catalyses the reaction an acyl phosphate + sn-glycerol 3-phosphate = a 1-acyl-sn-glycero-3-phosphate + phosphate. It participates in lipid metabolism; phospholipid metabolism. Functionally, catalyzes the transfer of an acyl group from acyl-phosphate (acyl-PO(4)) to glycerol-3-phosphate (G3P) to form lysophosphatidic acid (LPA). This enzyme utilizes acyl-phosphate as fatty acyl donor, but not acyl-CoA or acyl-ACP. The polypeptide is Glycerol-3-phosphate acyltransferase (Streptococcus agalactiae serotype III (strain NEM316)).